The primary structure comprises 434 residues: 3-isopropylmalate dehydratase large subunit 1 (434 aa).

[4Fe-4S] cluster contacts are provided by Cys308, Cys368, and Cys371.

It belongs to the aconitase/IPM isomerase family. LeuC type 2 subfamily. Heterodimer of LeuC and LeuD. Requires [4Fe-4S] cluster as cofactor.

It catalyses the reaction (2R,3S)-3-isopropylmalate = (2S)-2-isopropylmalate. It functions in the pathway amino-acid biosynthesis; L-leucine biosynthesis; L-leucine from 3-methyl-2-oxobutanoate: step 2/4. In terms of biological role, catalyzes the isomerization between 2-isopropylmalate and 3-isopropylmalate, via the formation of 2-isopropylmaleate. In Deinococcus radiodurans (strain ATCC 13939 / DSM 20539 / JCM 16871 / CCUG 27074 / LMG 4051 / NBRC 15346 / NCIMB 9279 / VKM B-1422 / R1), this protein is 3-isopropylmalate dehydratase large subunit 1.